The following is an 835-amino-acid chain: Outer membrane usher protein FasD (835 aa).

The N-terminal stretch at 1–21 (MNKYPPLLTMLIIGIGSNAVA) is a signal peptide. Residues Cys-810 and Cys-834 are joined by a disulfide bond.

The protein belongs to the fimbrial export usher family.

It localises to the cell outer membrane. Involved in the export and assembly of the 987P fimbriae subunits across the outer membrane. The chain is Outer membrane usher protein FasD (fasD) from Escherichia coli.